Consider the following 445-residue polypeptide: Canavalin (445 aa).

An N-terminal signal peptide occupies residues 1-26; sequence MAFSARFPLWLLLGVVLLASVSASFA. Cupin type-1 domains follow at residues 49 to 207 and 249 to 407; these read YLFR…DEIE and FNLR…EEVE.

Belongs to the 7S seed storage protein family. In terms of assembly, homotrimer.

Seed storage protein. The chain is Canavalin from Canavalia gladiata (Sword bean).